Consider the following 347-residue polypeptide: Selenide, water dikinase (347 aa).

The active site involves cysteine 17. ATP is bound by residues lysine 20 and 48–50; that span reads TRD. Aspartate 51 contributes to the Mg(2+) binding site. ATP contacts are provided by residues aspartate 68, aspartate 91, and 139–141; that span reads GHS. Residue aspartate 91 coordinates Mg(2+). Aspartate 227 lines the Mg(2+) pocket.

The protein belongs to the selenophosphate synthase 1 family. Class I subfamily. As to quaternary structure, homodimer. It depends on Mg(2+) as a cofactor.

The enzyme catalyses hydrogenselenide + ATP + H2O = selenophosphate + AMP + phosphate + 2 H(+). Its function is as follows. Synthesizes selenophosphate from selenide and ATP. This is Selenide, water dikinase from Enterobacter sp. (strain 638).